The chain runs to 114 residues: uncharacterized protein (114 aa).

The tract at residues 1–24 (MFGACYKQPLKPSGSEPPAEECRM) is disordered.

In terms of tissue distribution, expressed in kidney and liver.

This is an uncharacterized protein from Homo sapiens (Human).